The sequence spans 78 residues: Conotoxin ba1890.8 (78 aa).

The N-terminal stretch at 1–22 is a signal peptide; that stretch reads MKTSGRLLFLCLAVGLLLESQA. A propeptide spanning residues 23–61 is cleaved from the precursor; sequence HPIADAEDATRNVGSDGTSVELSEILERGQDSSAEKGQR. The tract at residues 25–78 is disordered; the sequence is IADAEDATRNVGSDGTSVELSEILERGQDSSAEKGQRQNDHDVDESGHDIPFPS. Positions 34–43 are enriched in polar residues; sequence NVGSDGTSVE. Basic and acidic residues predominate over residues 47–72; that stretch reads ILERGQDSSAEKGQRQNDHDVDESGH. Residue Gln62 is modified to Pyrrolidone carboxylic acid.

This sequence belongs to the conotoxin H superfamily. As to expression, expressed by the venom duct.

The protein resides in the secreted. Probable toxin. In Conus bayani (Bayan's cone), this protein is Conotoxin ba1890.8.